Reading from the N-terminus, the 72-residue chain is UPF0270 protein YheU (72 aa).

Belongs to the UPF0270 family.

This Salmonella agona (strain SL483) protein is UPF0270 protein YheU.